Here is a 211-residue protein sequence, read N- to C-terminus: LexA repressor (211 aa).

Positions 28–48 (VREVGEAVGLSSSSTIHGHIE) form a DNA-binding region, H-T-H motif. Residues serine 132 and lysine 170 each act as for autocatalytic cleavage activity in the active site.

The protein belongs to the peptidase S24 family. Homodimer.

The catalysed reaction is Hydrolysis of Ala-|-Gly bond in repressor LexA.. Its function is as follows. Represses a number of genes involved in the response to DNA damage (SOS response), including recA and lexA. In the presence of single-stranded DNA, RecA interacts with LexA causing an autocatalytic cleavage which disrupts the DNA-binding part of LexA, leading to derepression of the SOS regulon and eventually DNA repair. The chain is LexA repressor from Leuconostoc citreum (strain KM20).